The primary structure comprises 866 residues: MLRPGAQLLRGLLLRSCPLQGSPGRPRSVCGREGEEKPPLSAETQWKDRAETVIIGGGCVGVSLAYHLAKAGMKDVVLLEKSELTAGSTWHAAGLTTYFHPGINLKKIHYDSIKLYEKLEEETGQVVGFHQPGSIRLATTPVRVDEFKYQMTRTGWHATEQYLIEPEKIQEMFPLLNMNKVLAGLYNPGDGHIDPYSLTMALAAGARKCGALLKYPAPVTSLKARSDGTWDVETPQGSMRANRIVNAAGFWAREVGKMIGLEHPLIPVQHQYVVTSTISEVKALKRELPVLRDLEGSYYLRQERDGLLFGPYESQEKMKVQDSWVTNGVPPGFGKELFESDLDRIMEHIKAAMEMVPVLKKADIINVVNGPITYSPDILPMVGPHQGVRNYWVAIGFGYGIIHAGGVGKYLSDWILHGEPPFDLIELDPNRYGKWTTTQYTEAKARESYGFNNIVGYPKEERFAGRPTQRVSGLYQRLESKCSMGFHAGWEQPHWFYKPGQDTQYRPSFRRTNWFEPVGSEYKQVMQRVAVTDLSPFGKFNIKGQDSIRLLDHLFANVIPKVGFTNISHMLTPKGRVYAELTVSHQSPGEFLLITGSGSELHDLRWIEEEAVKGGYDVEIKNITDELGVLGVAGPQARKVLQKLTSEDLSDDVFKFLQTKSLKVSNIPVTAIRISYTGELGWELYHRREDSVALYDAIMNAGQEEGIDNFGTYAMNALRLEKAFRAWGLEMNCDTNPLEAGLEYFVKLNKPADFIGKQALKQIKAKGLKRRLVCLTLATDDVDPEGNESIWYNGKVVGNTTSGSYSYSIQKSLAFAYVPVQLSEVGQQVEVELLGKNYPAVIIQEPLVLTEPTRNRLQKKGGKDKT.

A mitochondrion-targeting transit peptide spans 1-50 (MLRPGAQLLRGLLLRSCPLQGSPGRPRSVCGREGEEKPPLSAETQWKDRA). A disordered region spans residues 20–42 (QGSPGRPRSVCGREGEEKPPLSA). FAD contacts are provided by residues 59–60 (CV), 80–81 (EK), and 87–95 (GSTWHAAGL). Tele-8alpha-FAD histidine is present on His-91. Lys-114 bears the N6-acetyllysine mark. N6-acetyllysine; alternate is present on Lys-148. The residue at position 148 (Lys-148) is an N6-succinyllysine; alternate. At Lys-168 the chain carries N6-acetyllysine. Val-219 provides a ligand contact to FAD. An N6-acetyllysine modification is found at Lys-223. Position 251 (Trp-251) interacts with FAD. N6-succinyllysine occurs at positions 317 and 319. An N6-acetyllysine mark is found at Lys-335 and Lys-360. 397 to 402 (FGYGII) contacts FAD. Lys-434 and Lys-523 each carry N6-acetyllysine; alternate. An N6-succinyllysine; alternate mark is found at Lys-434 and Lys-523. Residue 580 to 582 (ELT) coordinates (6S)-5,6,7,8-tetrahydrofolate. At Lys-655 the chain carries N6-acetyllysine; alternate. At Lys-655 the chain carries N6-succinyllysine; alternate. Residues Tyr-676, 683–685 (ELY), and Tyr-744 contribute to the (6S)-5,6,7,8-tetrahydrofolate site. Lys-764 is modified (N6-acetyllysine). Residue Lys-795 is modified to N6-succinyllysine.

The protein belongs to the GcvT family. Monomer. The cofactor is FAD.

It is found in the mitochondrion. It carries out the reaction (6S)-5,6,7,8-tetrahydrofolyl-(gamma-L-Glu)(n) + N,N-dimethylglycine + oxidized [electron-transfer flavoprotein] + H(+) = (6R)-5,10-methylenetetrahydrofolyl-(gamma-L-Glu)(n) + sarcosine + reduced [electron-transfer flavoprotein]. It functions in the pathway amine and polyamine degradation; betaine degradation; sarcosine from betaine: step 2/2. In terms of biological role, catalyzes the demethylation of N,N-dimethylglycine to sarcosine. Also has activity with sarcosine in vitro. This Homo sapiens (Human) protein is Dimethylglycine dehydrogenase, mitochondrial (DMGDH).